A 264-amino-acid polypeptide reads, in one-letter code: Phycocyanobilin:ferredoxin oxidoreductase (264 aa).

Belongs to the HY2 family.

It catalyses the reaction (2R,3Z)-phycocyanobilin + 4 oxidized [2Fe-2S]-[ferredoxin] = biliverdin IXalpha + 4 reduced [2Fe-2S]-[ferredoxin] + 4 H(+). Functionally, catalyzes the four-electron reduction of biliverdin IX-alpha (2-electron reduction at both the A and D rings); the reaction proceeds via an isolatable 2-electron intermediate, 181,182-dihydrobiliverdin. This is Phycocyanobilin:ferredoxin oxidoreductase (pcyA) from Prochlorococcus marinus (strain MIT 9313).